Consider the following 360-residue polypeptide: Glutamine synthetase (360 aa).

The region spanning 26-105 (IMAEYIWIDA…VLSECWNADG (80 aa)) is the GS beta-grasp domain. A GS catalytic domain is found at 112 to 360 (YRHECAKLME…METIYGSVDN (249 aa)).

This sequence belongs to the glutamine synthetase family. In terms of assembly, homooctamer.

The protein localises to the cytoplasm. It carries out the reaction L-glutamate + NH4(+) + ATP = L-glutamine + ADP + phosphate + H(+). The sequence is that of Glutamine synthetase (GLN1) from Colletotrichum gloeosporioides (Anthracnose fungus).